Reading from the N-terminus, the 45-residue chain is uncharacterized protein (45 aa).

This is an uncharacterized protein from Acidianus two-tailed virus (ATV).